Consider the following 287-residue polypeptide: Cbb3-type cytochrome c oxidase subunit FixP (287 aa).

The Cytoplasmic segment spans residues 1–33; that stretch reads MSQKHIDELSGVETTGHEWDGIQELNNPMPRWW. Residues 34–54 traverse the membrane as a helical segment; sequence IWTFYVTILWAIGYAIAYPAI. At 55 to 287 the chain is on the periplasmic side; that stretch reads PMITSATNGY…IFVHALGGGT (233 aa). 2 Cytochrome c domains span residues 108–196 and 203–284; these read FAIA…WGLT and GLAA…HALG. Residues C121, C124, H125, M173, C216, C219, H220, and M261 each contribute to the heme c site.

The protein belongs to the CcoP / FixP family. Component of the cbb3-type cytochrome c oxidase at least composed of FixN, FixO, FixQ and FixP. Heme c serves as cofactor.

The protein localises to the cell inner membrane. The protein operates within energy metabolism; oxidative phosphorylation. C-type cytochrome. Part of the cbb3-type cytochrome c oxidase complex. FixP subunit is required for transferring electrons from donor cytochrome c via its heme groups to FixO subunit. From there, electrons are shuttled to the catalytic binuclear center of FixN subunit where oxygen reduction takes place. The complex also functions as a proton pump. This chain is Cbb3-type cytochrome c oxidase subunit FixP, found in Rhizobium etli (strain ATCC 51251 / DSM 11541 / JCM 21823 / NBRC 15573 / CFN 42).